A 221-amino-acid chain; its full sequence is Glutathione S-transferase Z1 (221 aa).

The region spanning 7–88 (EKLKLYSYWR…YLDEKYPEPP (82 aa)) is the GST N-terminal domain. Glutathione contacts are provided by residues 17-18 (SS), 17-22 (SSCAHR), Gln-46, 46-47 (QF), 59-60 (TV), Val-60, 72-73 (DS), Gln-112, and 116-118 (NLA). Residues 93–218 (DLHKRAVNYQ…LPEKQPDAPS (126 aa)) form the GST C-terminal domain.

It belongs to the GST superfamily. Zeta family. As to quaternary structure, homodimer.

Its subcellular location is the cytoplasm. The protein localises to the cytosol. It carries out the reaction RX + glutathione = an S-substituted glutathione + a halide anion + H(+). Acts a maleylacetone isomerase. Also catalyzes the glutathione-dependent dehalogenation of dichloroacetic acid to glyoxylic acid. In vitro, possesses glutathione peroxidase activity toward cumene hydroperoxide and linoleic acid-13-hydroperoxide. This is Glutathione S-transferase Z1 (GSTZ1) from Arabidopsis thaliana (Mouse-ear cress).